The chain runs to 106 residues: Thiosulfate sulfurtransferase GlpE (106 aa).

In terms of domain architecture, Rhodanese spans Glu-17–Arg-105. Cys-65 acts as the Cysteine persulfide intermediate in catalysis.

Belongs to the GlpE family.

Its subcellular location is the cytoplasm. The catalysed reaction is thiosulfate + hydrogen cyanide = thiocyanate + sulfite + 2 H(+). The enzyme catalyses thiosulfate + [thioredoxin]-dithiol = [thioredoxin]-disulfide + hydrogen sulfide + sulfite + 2 H(+). In terms of biological role, transferase that catalyzes the transfer of sulfur from thiosulfate to thiophilic acceptors such as cyanide or dithiols. May function in a CysM-independent thiosulfate assimilation pathway by catalyzing the conversion of thiosulfate to sulfite, which can then be used for L-cysteine biosynthesis. The protein is Thiosulfate sulfurtransferase GlpE of Vibrio parahaemolyticus serotype O3:K6 (strain RIMD 2210633).